A 417-amino-acid chain; its full sequence is Transmembrane protease serine 11G (417 aa).

At 1–22 the chain is on the cytoplasmic side; the sequence is MYQPGILGRRKRVCKPWTVALT. A helical; Signal-anchor for type II membrane protein membrane pass occupies residues 23–43; that stretch reads TTAALLALAVLIGLLVYFLVY. Residues 44-417 are Extracellular-facing; the sequence is EEKTHYYQAS…RNWIKSKTNI (374 aa). The SEA domain maps to 46–165; it reads KTHYYQASFW…PYLREMNAAQ (120 aa). The 231-residue stretch at 186 to 416 folds into the Peptidase S1 domain; the sequence is IADGKPAGSN…YRNWIKSKTN (231 aa). A disulfide bridge connects residues Cys211 and Cys227. Residues His226 and Asp271 each act as charge relay system in the active site. 2 cysteine pairs are disulfide-bonded: Cys336-Cys352 and Cys363-Cys392. The active-site Charge relay system is Ser367.

This sequence belongs to the peptidase S1 family. Highest expression in lung and tongue. Also expressed in brain, colon, heart and liver. Isoform 1 is the predominant form in tongue whereas both isoforms are expressed in similar amounts in lung. At the cellular level, expression is confined to epithelial cells within the cleft of the circumvallate papillae extending into the ducts of the minor salivary glands, the respiratory epithelium of the nasal cavity and tear gland ducts.

Its subcellular location is the membrane. This chain is Transmembrane protease serine 11G (Tmprss11g), found in Rattus norvegicus (Rat).